The primary structure comprises 509 residues: Maturase K (509 aa).

The protein belongs to the intron maturase 2 family. MatK subfamily.

The protein resides in the plastid. Its subcellular location is the chloroplast. In terms of biological role, usually encoded in the trnK tRNA gene intron. Probably assists in splicing its own and other chloroplast group II introns. This chain is Maturase K, found in Anthocercis angustifolia (Narrow-leaf ray-flower).